We begin with the raw amino-acid sequence, 1111 residues long: Putative leucine--tRNA ligase, cytoplasmic (1111 aa).

The short motif at 74-84 (PYMNGALHLGH) is the 'HIGH' region element. At Ser460 the chain carries Phosphoserine. Residues 737 to 741 (KMSKS) carry the 'KMSKS' region motif. Lys740 is a binding site for ATP.

Belongs to the class-I aminoacyl-tRNA synthetase family.

The protein resides in the cytoplasm. It catalyses the reaction tRNA(Leu) + L-leucine + ATP = L-leucyl-tRNA(Leu) + AMP + diphosphate. The polypeptide is Putative leucine--tRNA ligase, cytoplasmic (lrs1) (Schizosaccharomyces pombe (strain 972 / ATCC 24843) (Fission yeast)).